A 103-amino-acid chain; its full sequence is Small ribosomal subunit protein uS10 (103 aa).

It belongs to the universal ribosomal protein uS10 family. Part of the 30S ribosomal subunit.

In terms of biological role, involved in the binding of tRNA to the ribosomes. The protein is Small ribosomal subunit protein uS10 of Shewanella amazonensis (strain ATCC BAA-1098 / SB2B).